We begin with the raw amino-acid sequence, 532 residues long: MTKAPVAPVVLVILDGWGYCEEKRGNAIVAAKTPIVDSLWAAYPHTLIRTSGKAVGLPEGQMGNSEVGHLNIGAGRVVPQELVRISDAVEDGSIALNPALVKICQEVRSRNSKLHLVGLCSEGGVHSHITHLFGLLDLAKNQQIPEVCIHAITDGRDTAPTDGVRAITMLQNYIDRTGIGRIVTLSGRYYAMDRDHRWDRVKRAYDVMTQDGVGDNRTAVEILQASYAEGVKDEFVNPIRIAPGAIEPGDGVIFFNFRPDRSRQLTQALVSPTFNGFERQQITPLSFVTFTQYDSDLPVAVAFEPQNLSNILGEVIANHGLNQFRTAETEKYAHVTYFFNGGLEEPFAGEDRELVSSPMVATYDHAPAMSAVAVTDVAIAAIQKGTYSLVVINYANPDMVGHTGQIDATITAIETVDRCLGRLLESVIKAGGTTIITADHGNAEYMLDDGGNPWTAHTTNPVPFILVEGEKVKIPGYGTNVELRSDGKLSDIAPTILEILQLPQPPEMTGRSLLKTADYELQRTRTPVQVGL.

Mn(2+) contacts are provided by D15 and S65. Catalysis depends on S65, which acts as the Phosphoserine intermediate. Substrate is bound by residues H126, 156-157, R188, R194, 258-261, and K331; these read RD and RPDR. Mn(2+)-binding residues include D398, H402, D439, H440, and H457.

The protein belongs to the BPG-independent phosphoglycerate mutase family. As to quaternary structure, monomer. It depends on Mn(2+) as a cofactor.

It carries out the reaction (2R)-2-phosphoglycerate = (2R)-3-phosphoglycerate. Its pathway is carbohydrate degradation; glycolysis; pyruvate from D-glyceraldehyde 3-phosphate: step 3/5. Its function is as follows. Catalyzes the interconversion of 2-phosphoglycerate and 3-phosphoglycerate. In Nostoc punctiforme (strain ATCC 29133 / PCC 73102), this protein is 2,3-bisphosphoglycerate-independent phosphoglycerate mutase.